A 483-amino-acid chain; its full sequence is Krueppel-like factor 4 (483 aa).

The segment at 22-42 (TFASGPAGREKTLRPAGAPTN) is disordered. Residue lysine 32 forms a Glycyl lysine isopeptide (Lys-Gly) (interchain with G-Cter in ubiquitin) linkage. The short motif at 99–107 (DLLDLDFIL) is the 9aaTAD element. Serine 251 is subject to Phosphoserine. Residues 294–395 (AGPQLSNGHR…KRGRRSWPRK (102 aa)) are disordered. A compositionally biased stretch (pro residues) spans 338–356 (LPLPPGFHPHPGPNYPPFL). At glutamate 381 the chain carries 5-glutamyl polyglutamate. Residues 386 to 395 (KRGRRSWPRK) show a composition bias toward basic residues. The tract at residues 386–483 (KRGRRSWPRK…HLALHMKRHF (98 aa)) is interaction with ZNF296. 3 consecutive C2H2-type zinc fingers follow at residues 400 to 424 (HTCD…LRTH), 430 to 454 (YHCD…YRKH), and 460 to 482 (FQCQ…MKRH). The interval 443 to 474 (RSDELTRHYRKHTGHRPFQCQKCDRAFSRSDH) is interaction with target DNA.

The protein belongs to the krueppel C2H2-type zinc-finger protein family. In terms of assembly, interacts with MUC1 (via the C-terminal domain). Interacts with POU5F1/OCT4 and SOX2. Interacts with MEIS2 isoform MeisD and PBX1 isoform PBX1a. Interacts with ZNF296. Interacts with GLIS1. Interacts with BTRC; this interaction leads to KLF4 ubiquitination and subsequent degradation. Interacts with IPO7; the interaction facilitates nuclear translocation of KLF4 in dental papilla cells. Ubiquitinated. 'Lys-48'-linked ubiquitinated and targeted for proteasomal degradation by the SCF(BTRC) E3 ubiquitin-protein ligase complex, thereby negatively regulating cell pluripotency maintenance and embryogenesis. In terms of processing, polyglutamylated by TTLL1 and TTLL4 at Glu-381, which inhibits KLF4 binding with E3 ligase component BTRC, thereby impeding ubiquitination. Deglutamylated by CCP1 and CCP6; deglutamylation promotes KLF4 ubiquitination. KLF4 glutamylation state plays a critical role in the regulation of its function in cell reprogramming, pluripotency maintenance and embryogenesis. As to expression, highest expression in the colon. Lower levels in testis, lung and small intestine.

The protein localises to the nucleus. It localises to the cytoplasm. Its function is as follows. Transcription factor; can act both as activator and as repressor. Binds the 5'-CACCC-3' core sequence. Binds to the promoter region of its own gene and can activate its own transcription. Regulates the expression of key transcription factors during embryonic development. Plays an important role in maintaining embryonic stem cells, and in preventing their differentiation. Required for establishing the barrier function of the skin and for postnatal maturation and maintenance of the ocular surface. Involved in the differentiation of epithelial cells and may also function in skeletal and kidney development. Contributes to the down-regulation of p53/TP53 transcription. In Mus musculus (Mouse), this protein is Krueppel-like factor 4 (Klf4).